The following is a 123-amino-acid chain: S-adenosylmethionine decarboxylase proenzyme 2 (123 aa).

The active-site Schiff-base intermediate with substrate; via pyruvic acid is serine 65. Position 65 is a pyruvic acid (Ser); by autocatalysis (serine 65). The active-site Proton acceptor; for processing activity is the histidine 70. Residue cysteine 85 is the Proton donor; for catalytic activity of the active site.

This sequence belongs to the prokaryotic AdoMetDC family. Type 1 subfamily. As to quaternary structure, heterotetramer of two alpha and two beta chains arranged as a dimer of alpha/beta heterodimers. Pyruvate is required as a cofactor. In terms of processing, is synthesized initially as an inactive proenzyme. Formation of the active enzyme involves a self-maturation process in which the active site pyruvoyl group is generated from an internal serine residue via an autocatalytic post-translational modification. Two non-identical subunits are generated from the proenzyme in this reaction, and the pyruvate is formed at the N-terminus of the alpha chain, which is derived from the carboxyl end of the proenzyme. The post-translation cleavage follows an unusual pathway, termed non-hydrolytic serinolysis, in which the side chain hydroxyl group of the serine supplies its oxygen atom to form the C-terminus of the beta chain, while the remainder of the serine residue undergoes an oxidative deamination to produce ammonia and the pyruvoyl group blocking the N-terminus of the alpha chain.

The enzyme catalyses S-adenosyl-L-methionine + H(+) = S-adenosyl 3-(methylsulfanyl)propylamine + CO2. The protein operates within amine and polyamine biosynthesis; S-adenosylmethioninamine biosynthesis; S-adenosylmethioninamine from S-adenosyl-L-methionine: step 1/1. In terms of biological role, catalyzes the decarboxylation of S-adenosylmethionine to S-adenosylmethioninamine (dcAdoMet), the propylamine donor required for the synthesis of the polyamines spermine and spermidine from the diamine putrescine. This Bacillus anthracis protein is S-adenosylmethionine decarboxylase proenzyme 2.